Here is a 494-residue protein sequence, read N- to C-terminus: Folate-biopterin transporter (494 aa).

A run of 12 helical transmembrane segments spans residues 31-51 (APSWELLAILSIYFVQGVLGL), 64-84 (LGLSPAAMGALIGLGAAPWIL), 104-124 (SYLWLSGLMGSAGWLLFAAWV), 133-153 (VLLFTSLSVAIGDVIVDSLVV), 170-190 (LTWGAAAVGGIITAYASGALL), 197-217 (TVFAITAIFPLLTVGAAFLIS), 246-266 (ILLPTLFIFFWQATPSAESAF), 284-303 (VRLVTSVAGLIGVGLYQRFL), 310-330 (VIMGWSTVISSLLGLTTLILI), 346-366 (LGDSIILTVTGQIAFMPVLVL), 375-395 (IEATLFALLMSVMNLAGVLSF), and 415-435 (LALLVIITNLSTLLPLPFLGL). The tract at residues 441 to 461 (PQVKDKTEKEDNPDDPGDRLV) is disordered.

The protein belongs to the major facilitator superfamily. Folate-biopterin transporter (TC 2.A.71) family.

It is found in the cell membrane. Its function is as follows. Mediates folate monoglutamate transport involved in tetrahydrofolate biosynthesis. It also mediates transport of antifolates, such as methotrexate and aminopterin. The protein is Folate-biopterin transporter of Synechocystis sp. (strain ATCC 27184 / PCC 6803 / Kazusa).